The primary structure comprises 253 residues: MGTILDKIVEQKKKEVAELYEIYTPVKTKRKTQSLVEALQQFTVIAEVKRASPSKGDINLHVDVRKQVGTYEKCGAGAVSVLTDGQFFKGSFHDLQTAREESNIPLLCKDFIIDKIQIDRAYEAGADIILLIVAALTKEKLKELYSYVLEKGLEAIVEVHDEQELETAIVLNPHVIGINNRNLKTFEVDLSQTEKLGKRLNEEKLLWISESGIHSKEDIIRVKRAGAKGVLVGEALMTSSSISSFFEDCKVNI.

The protein belongs to the TrpC family.

It catalyses the reaction 1-(2-carboxyphenylamino)-1-deoxy-D-ribulose 5-phosphate + H(+) = (1S,2R)-1-C-(indol-3-yl)glycerol 3-phosphate + CO2 + H2O. It functions in the pathway amino-acid biosynthesis; L-tryptophan biosynthesis; L-tryptophan from chorismate: step 4/5. The polypeptide is Indole-3-glycerol phosphate synthase (Bacillus cereus (strain ATCC 14579 / DSM 31 / CCUG 7414 / JCM 2152 / NBRC 15305 / NCIMB 9373 / NCTC 2599 / NRRL B-3711)).